Reading from the N-terminus, the 219-residue chain is Protein GrpE (219 aa).

Disordered regions lie at residues 1–32 (MSTTDNTNGDDRRPGQPEWDDEENNFEHLDAT) and 59–87 (FDGVDASTEDPGATVGETSTLESELAERT).

Belongs to the GrpE family. Homodimer.

It is found in the cytoplasm. Functionally, participates actively in the response to hyperosmotic and heat shock by preventing the aggregation of stress-denatured proteins, in association with DnaK and GrpE. It is the nucleotide exchange factor for DnaK and may function as a thermosensor. Unfolded proteins bind initially to DnaJ; upon interaction with the DnaJ-bound protein, DnaK hydrolyzes its bound ATP, resulting in the formation of a stable complex. GrpE releases ADP from DnaK; ATP binding to DnaK triggers the release of the substrate protein, thus completing the reaction cycle. Several rounds of ATP-dependent interactions between DnaJ, DnaK and GrpE are required for fully efficient folding. The sequence is that of Protein GrpE from Corynebacterium diphtheriae (strain ATCC 700971 / NCTC 13129 / Biotype gravis).